The following is a 506-amino-acid chain: Glycerol kinase (506 aa).

Thr-11 contributes to the ADP binding site. Residues Thr-11, Ser-12, and Ser-13 each contribute to the ATP site. Thr-11 contributes to the sn-glycerol 3-phosphate binding site. Position 15 (Arg-15) interacts with ADP. Sn-glycerol 3-phosphate is bound by residues Arg-81, Glu-82, Tyr-133, and Asp-242. The glycerol site is built by Arg-81, Glu-82, Tyr-133, Asp-242, and Gln-243. ADP-binding residues include Thr-264 and Gly-316. Residues Thr-264, Gly-316, Gln-320, and Gly-421 each coordinate ATP. Residues Gly-421 and Asn-425 each contribute to the ADP site.

It belongs to the FGGY kinase family.

It carries out the reaction glycerol + ATP = sn-glycerol 3-phosphate + ADP + H(+). Its pathway is polyol metabolism; glycerol degradation via glycerol kinase pathway; sn-glycerol 3-phosphate from glycerol: step 1/1. Its activity is regulated as follows. Inhibited by fructose 1,6-bisphosphate (FBP). Its function is as follows. Key enzyme in the regulation of glycerol uptake and metabolism. Catalyzes the phosphorylation of glycerol to yield sn-glycerol 3-phosphate. This is Glycerol kinase from Paracidovorax citrulli (strain AAC00-1) (Acidovorax citrulli).